The chain runs to 152 residues: UPF0178 protein SAS0646 (152 aa).

The protein belongs to the UPF0178 family.

The protein is UPF0178 protein SAS0646 of Staphylococcus aureus (strain MSSA476).